A 218-amino-acid chain; its full sequence is Pyridoxine/pyridoxamine 5'-phosphate oxidase (218 aa).

Residues 14-17 (RREY) and Lys72 contribute to the substrate site. FMN is bound by residues 67–72 (RIVLLK), 82–83 (YT), Arg88, Lys89, and Gln111. The substrate site is built by Tyr129, Arg133, and Ser137. FMN-binding positions include 146–147 (QS) and Trp191. 197-199 (RLH) lines the substrate pocket. Arg201 contacts FMN.

This sequence belongs to the pyridoxamine 5'-phosphate oxidase family. As to quaternary structure, homodimer. It depends on FMN as a cofactor.

The enzyme catalyses pyridoxamine 5'-phosphate + O2 + H2O = pyridoxal 5'-phosphate + H2O2 + NH4(+). It catalyses the reaction pyridoxine 5'-phosphate + O2 = pyridoxal 5'-phosphate + H2O2. Its pathway is cofactor metabolism; pyridoxal 5'-phosphate salvage; pyridoxal 5'-phosphate from pyridoxamine 5'-phosphate: step 1/1. It participates in cofactor metabolism; pyridoxal 5'-phosphate salvage; pyridoxal 5'-phosphate from pyridoxine 5'-phosphate: step 1/1. Functionally, catalyzes the oxidation of either pyridoxine 5'-phosphate (PNP) or pyridoxamine 5'-phosphate (PMP) into pyridoxal 5'-phosphate (PLP). The sequence is that of Pyridoxine/pyridoxamine 5'-phosphate oxidase from Escherichia coli O127:H6 (strain E2348/69 / EPEC).